A 323-amino-acid chain; its full sequence is MAFVPAPGYQPTYNPTLPYYKPIPGGLRVGMSVYIQGVANEHMKRFFVNFVVGQGPGADVAFHFNPRFDGWDKVVFNSQQDGKWGNEEKKRSMPFRKAPAFELVIMVLPEHYKVVVNGDPFYEFGHRIPVQLVTHLQVDGDLTLQSINFIGGQPAPSPGPMPNPGYPGPGKHNQQPCNLPCMEGAPTFNPPVPYKTRLQGGLVARRTIVIKGYVPPSGKSLVINFKVGSSGDVALHINPRLTEGIVVRNSYLNGKWGAEERKSSFNPFAPGQYFDLSIRCGLDRFKVYANGQHLFDFSHRLSNFQGVDTLEIQGDVTLSYVQI.

2 Galectin domains span residues 19-150 (YYKP…INFI) and 194-323 (YKTR…YVQI). Position 256–262 (256–262 (WGAEERK)) interacts with a beta-D-galactoside.

In terms of assembly, monomer.

Functionally, galectin that binds lactose and a related range of sugars. May be involved in the assembly of adherens junctions. The sequence is that of Galectin-4 (LGALS4) from Sus scrofa (Pig).